Consider the following 118-residue polypeptide: Peptidyl-prolyl cis-trans isomerase Pin1 (118 aa).

2 disordered regions span residues 1–37 and 61–84; these read MSSE…ATTR and LASR…GRGQ. Positions 3-118 constitute a PpiC domain; that stretch reads SEKVRASHIL…SGVHIIKRTG (116 aa). A compositionally biased stretch (basic residues) spans 12–22; the sequence is LIKHQGSRRKS.

It belongs to the PpiC/parvulin rotamase family. Post-translationally, the N-terminus is blocked. In terms of tissue distribution, expressed in roots, stems, leaves, flowers and seedlings.

It is found in the cytoplasm. The protein resides in the nucleus. It carries out the reaction [protein]-peptidylproline (omega=180) = [protein]-peptidylproline (omega=0). Its activity is regulated as follows. Inhibited in vitro by juglone. Functionally, prolyl cis/trans isomerase with specificity for phospho-Ser-Pro bonds. The protein is Peptidyl-prolyl cis-trans isomerase Pin1 (PARV12.8) of Digitalis lanata (Grecian foxglove).